Consider the following 197-residue polypeptide: Isopentenyl-diphosphate Delta-isomerase (197 aa).

Mn(2+)-binding residues include His41 and His48. Residues 46 to 183 enclose the Nudix hydrolase domain; it reads QLHRAFSVFL…SWFMTVLDAA (138 aa). Cys83 is an active-site residue. Mg(2+) is bound at residue Cys83. Mn(2+) is bound at residue His85. Residue Glu103 participates in Mg(2+) binding. 2 residues coordinate Mn(2+): Glu130 and Glu132. Glu132 is an active-site residue.

Belongs to the IPP isomerase type 1 family. Mg(2+) serves as cofactor. The cofactor is Mn(2+).

The protein resides in the cytoplasm. It carries out the reaction isopentenyl diphosphate = dimethylallyl diphosphate. It participates in isoprenoid biosynthesis; dimethylallyl diphosphate biosynthesis; dimethylallyl diphosphate from isopentenyl diphosphate: step 1/1. In terms of biological role, catalyzes the 1,3-allylic rearrangement of the homoallylic substrate isopentenyl (IPP) to its highly electrophilic allylic isomer, dimethylallyl diphosphate (DMAPP). The chain is Isopentenyl-diphosphate Delta-isomerase from Streptomyces avermitilis (strain ATCC 31267 / DSM 46492 / JCM 5070 / NBRC 14893 / NCIMB 12804 / NRRL 8165 / MA-4680).